Reading from the N-terminus, the 142-residue chain is Large ribosomal subunit protein uL13 (142 aa).

Belongs to the universal ribosomal protein uL13 family. Part of the 50S ribosomal subunit.

This protein is one of the early assembly proteins of the 50S ribosomal subunit, although it is not seen to bind rRNA by itself. It is important during the early stages of 50S assembly. The chain is Large ribosomal subunit protein uL13 from Alcanivorax borkumensis (strain ATCC 700651 / DSM 11573 / NCIMB 13689 / SK2).